A 206-amino-acid polypeptide reads, in one-letter code: Probable GTP-binding protein EngB (206 aa).

The region spanning 23–197 (QGIEVAFAGR…ERVLDKWFGY (175 aa)) is the EngB-type G domain. GTP contacts are provided by residues 31 to 38 (GRSNAGKS), 58 to 62 (GRTQL), 76 to 79 (DLPG), 143 to 146 (TKAD), and 176 to 178 (FSS). Residues Ser-38 and Thr-60 each contribute to the Mg(2+) site.

Belongs to the TRAFAC class TrmE-Era-EngA-EngB-Septin-like GTPase superfamily. EngB GTPase family. Requires Mg(2+) as cofactor.

Functionally, necessary for normal cell division and for the maintenance of normal septation. This chain is Probable GTP-binding protein EngB, found in Pseudoalteromonas atlantica (strain T6c / ATCC BAA-1087).